Consider the following 650-residue polypeptide: Chaperone protein HtpG (650 aa).

The tract at residues 1-356 (MSTRVETLEF…THDLSLNISR (356 aa)) is a; substrate-binding. The interval 222 to 245 (AKDRDSNDDGTAESGAGAENAGDR) is disordered. The interval 357-572 (EILQQDRRIQ…TFDMTPALEK (216 aa)) is b. The c stretch occupies residues 573–650 (MYRAMGHEMP…LLAERLAEAL (78 aa)).

Belongs to the heat shock protein 90 family. In terms of assembly, homodimer.

The protein resides in the cytoplasm. Molecular chaperone. Has ATPase activity. The sequence is that of Chaperone protein HtpG from Frankia casuarinae (strain DSM 45818 / CECT 9043 / HFP020203 / CcI3).